Here is a 189-residue protein sequence, read N- to C-terminus: Copper transport protein CTR2 (189 aa).

Topologically, residues 1–81 (MDDKKTWSTV…VVFEWWHIKT (81 aa)) are cytoplasmic. A helical transmembrane segment spans residues 82–102 (LPGLILSCLAIFGLAYLYEYL). Residues 103–142 (KYCVHKRQLSQRVLLPNRSLTKINQADKVSNSILYGLQVG) are Vacuolar-facing. A helical membrane pass occupies residues 143-163 (FSFMLMLVFMTYNGWLMLAVV). Residues 164 to 189 (CGAIWGNYSWCTSYSPEIDDSSLACH) are Cytoplasmic-facing.

The protein belongs to the copper transporter (Ctr) (TC 1.A.56) family. SLC31A subfamily. In terms of assembly, homomultimer.

The protein localises to the vacuole membrane. Its function is as follows. Provides bioavailable copper via mobilization of vacuolar copper stores and export to the cytoplasm. This chain is Copper transport protein CTR2 (CTR2), found in Saccharomyces cerevisiae (strain ATCC 204508 / S288c) (Baker's yeast).